Here is a 239-residue protein sequence, read N- to C-terminus: Geranylgeranylglyceryl phosphate synthase (239 aa).

The Mg(2+) site is built by D18 and S45. Sn-glycerol 1-phosphate is bound by residues 166–172, 197–198, and 219–220; these read YLEAGSG, GG, and GT.

It belongs to the GGGP/HepGP synthase family. Group II subfamily. The cofactor is Mg(2+).

Its subcellular location is the cytoplasm. The catalysed reaction is sn-glycerol 1-phosphate + (2E,6E,10E)-geranylgeranyl diphosphate = sn-3-O-(geranylgeranyl)glycerol 1-phosphate + diphosphate. It participates in membrane lipid metabolism; glycerophospholipid metabolism. Its function is as follows. Prenyltransferase that catalyzes the transfer of the geranylgeranyl moiety of geranylgeranyl diphosphate (GGPP) to the C3 hydroxyl of sn-glycerol-1-phosphate (G1P). This reaction is the first ether-bond-formation step in the biosynthesis of archaeal membrane lipids. The polypeptide is Geranylgeranylglyceryl phosphate synthase (Pyrobaculum aerophilum (strain ATCC 51768 / DSM 7523 / JCM 9630 / CIP 104966 / NBRC 100827 / IM2)).